The primary structure comprises 196 residues: Pyridoxal 5'-phosphate synthase subunit PdxT (196 aa).

An L-glutamine-binding site is contributed by 56–58 (GES). C85 functions as the Nucleophile in the catalytic mechanism. L-glutamine contacts are provided by residues R113 and 141–142 (IR). Catalysis depends on charge relay system residues H177 and E179.

Belongs to the glutaminase PdxT/SNO family. In the presence of PdxS, forms a dodecamer of heterodimers. Only shows activity in the heterodimer.

It carries out the reaction aldehydo-D-ribose 5-phosphate + D-glyceraldehyde 3-phosphate + L-glutamine = pyridoxal 5'-phosphate + L-glutamate + phosphate + 3 H2O + H(+). The enzyme catalyses L-glutamine + H2O = L-glutamate + NH4(+). It functions in the pathway cofactor biosynthesis; pyridoxal 5'-phosphate biosynthesis. Functionally, catalyzes the hydrolysis of glutamine to glutamate and ammonia as part of the biosynthesis of pyridoxal 5'-phosphate. The resulting ammonia molecule is channeled to the active site of PdxS. The protein is Pyridoxal 5'-phosphate synthase subunit PdxT of Methanospirillum hungatei JF-1 (strain ATCC 27890 / DSM 864 / NBRC 100397 / JF-1).